We begin with the raw amino-acid sequence, 460 residues long: U-box domain-containing protein 9 (460 aa).

The U-box domain maps to 73-147; that stretch reads SCPEEFRCPL…SKWCKKNGLE (75 aa). 3 ARM repeats span residues 201–244, 248–287, and 289–328; these read TEFR…NISI, SNKKLVCENPNVIPLLIDALRRGTVATRSNAAAAIFTLSA, and DSNKVLIGKSGILKPLIDLLEEGNPLAIKDVAAAIFTLCI.

Binds to SD11, SD16, SD17, SD18, SD113, SD129 and SD25. Phosphorylated by SD1-6 and SD1-7.

It localises to the nucleus. The protein localises to the cell membrane. The catalysed reaction is S-ubiquitinyl-[E2 ubiquitin-conjugating enzyme]-L-cysteine + [acceptor protein]-L-lysine = [E2 ubiquitin-conjugating enzyme]-L-cysteine + N(6)-ubiquitinyl-[acceptor protein]-L-lysine.. The protein operates within protein modification; protein ubiquitination. Functionally, functions as an E3 ubiquitin ligase. May be involved in the abscisic acid-mediated signaling pathway, at least during germination. This Arabidopsis thaliana (Mouse-ear cress) protein is U-box domain-containing protein 9 (PUB9).